A 418-amino-acid polypeptide reads, in one-letter code: 3-phosphoshikimate 1-carboxyvinyltransferase (418 aa).

3-phosphoshikimate contacts are provided by K26, S27, and R31. K26 contributes to the phosphoenolpyruvate binding site. Positions 97 and 125 each coordinate phosphoenolpyruvate. Positions 170, 171, 172, 297, 320, and 324 each coordinate 3-phosphoshikimate. Q172 is a phosphoenolpyruvate binding site. The Proton acceptor role is filled by D297. 3 residues coordinate phosphoenolpyruvate: R328, R375, and K400.

It belongs to the EPSP synthase family. In terms of assembly, monomer.

Its subcellular location is the cytoplasm. The enzyme catalyses 3-phosphoshikimate + phosphoenolpyruvate = 5-O-(1-carboxyvinyl)-3-phosphoshikimate + phosphate. It functions in the pathway metabolic intermediate biosynthesis; chorismate biosynthesis; chorismate from D-erythrose 4-phosphate and phosphoenolpyruvate: step 6/7. Functionally, catalyzes the transfer of the enolpyruvyl moiety of phosphoenolpyruvate (PEP) to the 5-hydroxyl of shikimate-3-phosphate (S3P) to produce enolpyruvyl shikimate-3-phosphate and inorganic phosphate. The chain is 3-phosphoshikimate 1-carboxyvinyltransferase from Pseudomonas syringae pv. syringae (strain B728a).